The sequence spans 571 residues: Minichromosome maintenance protein 10 (571 aa).

Phosphothreonine is present on Thr-17. Position 18 is a phosphoserine (Ser-18). The interval 309–335 is zinc finger-like; that stretch reads CPIVNKKTHKKCGSPINISLHKCCDYH. Residues 435–451 carry the Bipartite nuclear localization signal motif; it reads KKSTALSRELGKIMRRR. Sufficient for nuclear localization regions lie at residues 435–512 and 453–553; these read KKST…LLGK and SSGL…KHFG. Basic and acidic residues predominate over residues 451–471; it reads RESSGLEDKSVGERQKMKRTT. The disordered stretch occupies residues 451 to 473; the sequence is RESSGLEDKSVGERQKMKRTTES. Phosphoserine occurs at positions 453 and 454. The Bipartite nuclear localization signal motif lies at 512–527; sequence KKKTVINDLLHYKKEK. The span at 548 to 561 shows a compositional bias: basic and acidic residues; sequence WQKHFGSKETKETS. A disordered region spans residues 548-571; sequence WQKHFGSKETKETSDGSASDLEII.

Belongs to the MCM10 family. In terms of assembly, self-associates; assembles into large homomultimeric complexes of approximately 800 kDa. Associates with the MCM2-7 complex and the DNA polymerase alpha:primase complex. Interacts with ORC1, ORC2, MCM2, MCM3, CDC54/MCM4, MCM6, CDC47/MCM7, RFA2, CDC45, POL1, PRI2, POL12, SIR2 and SIR3. The diubiquitinated form interacts with POL30/PCNA C-terminus. Diubiquitinated in a cell cycle-regulated manner. Ubiquitination first appears in late G(1) and persists throughout S phase.

Its subcellular location is the nucleus. Its function is as follows. Required for DNA synthesis. Required for entry into or completion of S phase. Involved in DNA replication and seems to participate in the activation of the pre-replication complex (pre-RC) and in transcription elongation. May play a role as a key coordinator in assembling the replication fork. Proposed to function at replication origins following the binding of the MCM2-7 complex prior to the recruitment of CDC45. Probably is required to stimulate phosphorylation of the MCM2-7 complex by the CDC7-DBF4 kinase complex. May recruit the DNA polymerase alpha:primase complex to replication origins and is required to maintain it on chromatin independently of CDC45. May also play a role in transcriptional silencing. The chain is Minichromosome maintenance protein 10 (MCM10) from Saccharomyces cerevisiae (strain ATCC 204508 / S288c) (Baker's yeast).